A 424-amino-acid chain; its full sequence is 3-ketoacyl-CoA thiolase A, peroxisomal (424 aa).

The transit peptide at 1 to 26 (MHRLQVVLGHLAGRPESSSALQAAPC) directs the protein to the peroxisome. Residues 1–26 (MHRLQVVLGHLAGRPESSSALQAAPC) are PTS2-type peroxisomal targeting signal. The active-site Acyl-thioester intermediate is the cysteine 123. N6-acetyllysine occurs at positions 173 and 234. Residues histidine 377 and cysteine 408 each act as proton acceptor in the active site.

It belongs to the thiolase-like superfamily. Thiolase family. Homodimer. Interacts (via PTS2-type peroxisomal targeting signal region) with PEX7; leading to its translocation into peroxisomes. In terms of tissue distribution, mainly expressed in liver and intestine.

The protein localises to the peroxisome. The catalysed reaction is an acyl-CoA + acetyl-CoA = a 3-oxoacyl-CoA + CoA. The enzyme catalyses 2 acetyl-CoA = acetoacetyl-CoA + CoA. It catalyses the reaction tetradecanoyl-CoA + acetyl-CoA = 3-oxohexadecanoyl-CoA + CoA. It carries out the reaction hexanoyl-CoA + acetyl-CoA = 3-oxooctanoyl-CoA + CoA. The catalysed reaction is 3-oxohexadecanedioyl-CoA + CoA = tetradecanedioyl-CoA + acetyl-CoA. The enzyme catalyses 3-oxo-(6Z,9Z,12Z,15Z,18Z,21Z)-tetracosahexaenoyl-CoA + CoA = (4Z,7Z,10Z,13Z,16Z,19Z)-docosahexaenoyl-CoA + acetyl-CoA. It functions in the pathway lipid metabolism; peroxisomal fatty acid beta-oxidation. In terms of biological role, responsible for the thiolytic cleavage of straight chain 3-keto fatty acyl-CoAs (3-oxoacyl-CoAs). Plays an important role in fatty acid peroxisomal beta-oxidation. Catalyzes the cleavage of short, medium, long, and very long straight chain 3-oxoacyl-CoAs. The sequence is that of 3-ketoacyl-CoA thiolase A, peroxisomal from Mus musculus (Mouse).